Consider the following 328-residue polypeptide: 2-oxoglutarate-dependent dioxygenase gloF (328 aa).

The Fe2OG dioxygenase domain maps to 175-289 (DTSELRMNHY…RYSVAYFGKP (115 aa)). Fe cation contacts are provided by His201, Asp203, and His261. Arg280 serves as a coordination point for 2-oxoglutarate.

It belongs to the iron/ascorbate-dependent oxidoreductase family. The cofactor is Fe(2+).

The protein operates within mycotoxin biosynthesis. 2-oxoglutarate-dependent dioxygenase; part of the gene cluster that mediates the biosynthesis of pneumocandins, lipohexapeptides of the echinocandin family that prevent fungal cell wall formation by non-competitive inhibition of beta-1,3-glucan synthase. The 10,12-dimethylmyristoyl side chain is synthesized by the reducing polyketide synthase gloL/GLPKS4. The thioesterase gloN/GLHYD exclusively interacts with gloL/GLPKS4 to maintain turnover of the polyketide side chain. The 10R,12S-dimethylmyristic acid is then transferred to the first thiolation domain of the nonribosomal peptide synthetase gloA/GLNRPS4 by the acyl-AMP ligase gloD/GLligase, followed by its acylation to L-ornithine to trigger elongation of the cyclic hexapeptide. L-ornithine, 4R-hydroxyl-L-proline (generated from L-proline by the dioxygenase gloF/GLOXY2), 3S-hydroxyl-L-homotyrosine (generated by gloG/GLHtyB, gloH/GLHtyA, gloI/GLHtyC, gloJ/GLHtyD and hydroxylated at C-3 by the dioxygenase gloM/GLOXY1), 3R-hydroxyl-L-glutamine (generated from L-glutamine probably by the dioxygenase gloE/GLOXY3) and 3S-hydroxyl-L-proline (generated from L-proline by the dioxygenase gloF/GLOXY2 to yield pneumocandin B0), or 3S-hydroxyl-4S-methyl-L-proline (generated from L-leucine by the dioxygenase gloC/GLOXY4 to yield pneumocandin A0) are sequentially added to the growing chain. The last C domain of gloA/GLNRPS4 is proposed to be responsible for cyclization by condensation to form the peptide bond between L-ornithine and 3S-hydroxyl-4S-methyl-L-proline (for pneumocandin A0) or 3S-hydroxyl-L-proline (for pneumocandin B0). Finally, the subsequent C-4 hydroxylation of 3S-hydroxyl-L-homotyrosine and L-ornithine dihydroxylation at C-4 and C-5 are performed by the cytochrome P450 monooxygenases gloP/GLP450-1 and gloO/GLP450-2, respectively. The chain is 2-oxoglutarate-dependent dioxygenase gloF from Glarea lozoyensis (strain ATCC 20868 / MF5171).